Here is a 377-residue protein sequence, read N- to C-terminus: MLKRASFVEVNTASLRHNFSAVKSIVPKDAHIMAVVKANAYGVGAIKASEIFLQEGAHYLGVATLDEALELHSHFSKTPILILGYSPNSNASMLIDNDLSAMIFSLEQAEVFSQTALKSQKRLKVHLKIDTGMHRLGLEPNFKSIEIIKKIRALKGLEVEGIFTHLSNADAKIKTHAKNQMKAFNAFLEQLSNQKIEFQYRHAYNSAGILSLCNGNENRFLNLYRPGIMLYGFYPSNGMKETCPTILKNVISLKAQIVQIRSVKKGEFIGYGEHFYTNEETLVGVLALGYADGLMRALGNRIQVAINNQLAPLIGKVCMDQCFVKLNNIQAKEGDEVILFGDKSAKANDASEIAALLNTIPYETISTLSKRLERVYI.

Catalysis depends on lysine 37, which acts as the Proton acceptor; specific for D-alanine. N6-(pyridoxal phosphate)lysine is present on lysine 37. Arginine 135 is a binding site for substrate. Tyrosine 271 serves as the catalytic Proton acceptor; specific for L-alanine. Methionine 319 lines the substrate pocket.

The protein belongs to the alanine racemase family. It depends on pyridoxal 5'-phosphate as a cofactor.

It carries out the reaction L-alanine = D-alanine. The protein operates within amino-acid biosynthesis; D-alanine biosynthesis; D-alanine from L-alanine: step 1/1. Catalyzes the interconversion of L-alanine and D-alanine. May also act on other amino acids. This Helicobacter pylori (strain Shi470) protein is Alanine racemase (alr).